We begin with the raw amino-acid sequence, 76 residues long: cAMP-dependent protein kinase inhibitor alpha (76 aa).

Thr-2 carries the N-acetylthreonine modification. The interval 49–76 (KTEGEEDAQRSSTEQSGEAQGEAAKSES) is disordered.

It belongs to the PKI family.

In terms of biological role, extremely potent competitive inhibitor of cAMP-dependent protein kinase activity, this protein interacts with the catalytic subunit of the enzyme after the cAMP-induced dissociation of its regulatory chains. This is cAMP-dependent protein kinase inhibitor alpha (PKIA) from Homo sapiens (Human).